The sequence spans 205 residues: Small ribosomal subunit protein uS2 (205 aa).

It belongs to the universal ribosomal protein uS2 family.

This chain is Small ribosomal subunit protein uS2, found in Methanoculleus marisnigri (strain ATCC 35101 / DSM 1498 / JR1).